A 224-amino-acid polypeptide reads, in one-letter code: tRNA (guanine-N(7)-)-methyltransferase (224 aa).

Residues Glu-57, Asp-82, and Asp-109 each contribute to the S-adenosyl-L-methionine site. Asp-167 contacts substrate.

It belongs to the class I-like SAM-binding methyltransferase superfamily. TrmB family.

The catalysed reaction is guanosine(46) in tRNA + S-adenosyl-L-methionine = N(7)-methylguanosine(46) in tRNA + S-adenosyl-L-homocysteine. Its pathway is tRNA modification; N(7)-methylguanine-tRNA biosynthesis. In terms of biological role, catalyzes the formation of N(7)-methylguanine at position 46 (m7G46) in tRNA. The sequence is that of tRNA (guanine-N(7)-)-methyltransferase from Chloroflexus aurantiacus (strain ATCC 29366 / DSM 635 / J-10-fl).